The chain runs to 406 residues: MKTASIITVGSEIIEGIILNTNEKYICYKLTEAGLKVIRTISVDDDIESIKNAVNYSLNDSDVIVLSGGLGPTEDDKTREAIAESLKLKIALNEELKKAIEKRISKYHRYVPSNIAKQAMVIENAKILENHVGSAPGQLVFHKGKILVLLPGPPQELEPMLNNALNEIKPQPDLSTLSMLFFSIPEAELDEIITSIVHDTSVKIATQASYFDGVRVRLSAPKAKAEELTKLSKKIIELTGEKFIGYGNITLEEAVIKLLKKKHQTLSIAESCTGGMISSRLVNIPGASEVFLGAIVAYNNSVKRNILNVSNKILEKYGAVSQQCVAEMAEGVRKIMKSDLALAVSGIAGPTGGSEKKPVGTVYFCIAGESIKDIQRLFYPQQRNVFRSRVSAYGLYLILKCLSNML.

It belongs to the CinA family.

This Pseudothermotoga lettingae (strain ATCC BAA-301 / DSM 14385 / NBRC 107922 / TMO) (Thermotoga lettingae) protein is CinA-like protein.